The chain runs to 325 residues: Cell division protein ZipA (325 aa).

Over 1–5 (MQELR) the chain is Periplasmic. Residues 6–26 (LVLILVGALAIAALLFHGLWT) form a helical membrane-spanning segment. At 27–325 (SRKETSSKFG…KQRVKVFCRK (299 aa)) the chain is on the cytoplasmic side.

It belongs to the ZipA family. As to quaternary structure, interacts with FtsZ via their C-terminal domains.

The protein resides in the cell inner membrane. Its function is as follows. Essential cell division protein that stabilizes the FtsZ protofilaments by cross-linking them and that serves as a cytoplasmic membrane anchor for the Z ring. Also required for the recruitment to the septal ring of downstream cell division proteins. The protein is Cell division protein ZipA of Aliivibrio fischeri (strain MJ11) (Vibrio fischeri).